Reading from the N-terminus, the 330-residue chain is Olfactory receptor 5P70 (330 aa).

The Extracellular segment spans residues 1-28 (MAFLEDGNHTIVTEFILLGLTDDPVLRD). A glycan (N-linked (GlcNAc...) asparagine) is linked at Asn-8. The chain crosses the membrane as a helical span at residues 29–49 (ILFTIILCIYLVTVSGNLSTI). Over 50-57 (LLIRVSSQ) the chain is Cytoplasmic. Residues 58–78 (LHHPMYFFLSHLASVDIGISS) form a helical membrane-spanning segment. Residues 79 to 102 (SVTPNMLANFLVKPNTISYIGCSI) are Extracellular-facing. The cysteines at positions 100 and 192 are disulfide-linked. A helical transmembrane segment spans residues 103–123 (QFTSAVFLATVECFLLAAMAY). Topologically, residues 124-136 (DRFVAICNPLLYS) are cytoplasmic. A helical transmembrane segment spans residues 137 to 157 (TKMSREACIQLVVGSYIQGLL). The Extracellular portion of the chain corresponds to 158–199 (NASFFTLSFFSLIFCGPNRINHFYCDLAPLVELSCSDVTLAV). Residues 200–220 (VITSISAGFITLTTVFVIAIS) traverse the membrane as a helical segment. Over 221–240 (YSCIFITIMKMHSTESRYKA) the chain is Cytoplasmic. A helical transmembrane segment spans residues 241–261 (FSTCTSHLTAVTLFYGTTMFI). Residues 262-274 (YVMPKSSYSTDQN) are Extracellular-facing. The helical transmembrane segment at 275-295 (KVLSVFYMVVIPMLNPLIYSL) threads the bilayer. The Cytoplasmic portion of the chain corresponds to 296-330 (RNNEIKGALKRYLGKKIFSYGNLFCKTHYNDTHQV).

Belongs to the G-protein coupled receptor 1 family.

It is found in the cell membrane. In terms of biological role, potential odorant receptor. This is Olfactory receptor 5P70 from Mus musculus (Mouse).